The primary structure comprises 239 residues: Purine nucleoside phosphorylase DeoD-type (239 aa).

Position 5 (histidine 5) interacts with a purine D-ribonucleoside. Residues glycine 21, arginine 25, arginine 44, and 88–91 (RVGS) each bind phosphate. A purine D-ribonucleoside-binding positions include 180–182 (EME) and 204–205 (SD). The active-site Proton donor is the aspartate 205.

Belongs to the PNP/UDP phosphorylase family. As to quaternary structure, homohexamer; trimer of homodimers.

The enzyme catalyses a purine D-ribonucleoside + phosphate = a purine nucleobase + alpha-D-ribose 1-phosphate. It carries out the reaction a purine 2'-deoxy-D-ribonucleoside + phosphate = a purine nucleobase + 2-deoxy-alpha-D-ribose 1-phosphate. Catalyzes the reversible phosphorolytic breakdown of the N-glycosidic bond in the beta-(deoxy)ribonucleoside molecules, with the formation of the corresponding free purine bases and pentose-1-phosphate. This is Purine nucleoside phosphorylase DeoD-type from Klebsiella pneumoniae (strain 342).